The chain runs to 274 residues: tRNA-cytidine(32) 2-sulfurtransferase (274 aa).

A PP-loop motif motif is present at residues 40 to 45; the sequence is SGGKDS. Positions 115, 118, and 206 each coordinate [4Fe-4S] cluster.

This sequence belongs to the TtcA family. In terms of assembly, homodimer. It depends on Mg(2+) as a cofactor. [4Fe-4S] cluster is required as a cofactor.

It is found in the cytoplasm. The enzyme catalyses cytidine(32) in tRNA + S-sulfanyl-L-cysteinyl-[cysteine desulfurase] + AH2 + ATP = 2-thiocytidine(32) in tRNA + L-cysteinyl-[cysteine desulfurase] + A + AMP + diphosphate + H(+). It functions in the pathway tRNA modification. In terms of biological role, catalyzes the ATP-dependent 2-thiolation of cytidine in position 32 of tRNA, to form 2-thiocytidine (s(2)C32). The sulfur atoms are provided by the cysteine/cysteine desulfurase (IscS) system. The protein is tRNA-cytidine(32) 2-sulfurtransferase of Pseudomonas fluorescens (strain Pf0-1).